Consider the following 129-residue polypeptide: Phosphoribosyl-AMP cyclohydrolase (129 aa).

A Mg(2+)-binding site is contributed by D77. Residue C78 coordinates Zn(2+). Mg(2+)-binding residues include D79 and D81. Zn(2+)-binding residues include C94 and C101.

This sequence belongs to the PRA-CH family. Homodimer. The cofactor is Mg(2+). It depends on Zn(2+) as a cofactor.

It localises to the cytoplasm. The enzyme catalyses 1-(5-phospho-beta-D-ribosyl)-5'-AMP + H2O = 1-(5-phospho-beta-D-ribosyl)-5-[(5-phospho-beta-D-ribosylamino)methylideneamino]imidazole-4-carboxamide. It functions in the pathway amino-acid biosynthesis; L-histidine biosynthesis; L-histidine from 5-phospho-alpha-D-ribose 1-diphosphate: step 3/9. In terms of biological role, catalyzes the hydrolysis of the adenine ring of phosphoribosyl-AMP. The protein is Phosphoribosyl-AMP cyclohydrolase of Methanosphaera stadtmanae (strain ATCC 43021 / DSM 3091 / JCM 11832 / MCB-3).